The following is an 887-amino-acid chain: Integrator complex subunit 6 (887 aa).

Positions 3–227 constitute a VWFA domain; it reads ILLFLIDTSA…QCLESLVQKV (225 aa). Residues 626–633 carry the Inhibitory loop motif; that stretch reads MMIDEADE. S804 carries the post-translational modification Phosphoserine.

This sequence belongs to the Integrator subunit 6 family. Component of the Integrator complex, composed of core subunits INTS1, INTS2, INTS3, INTS4, INTS5, INTS6, INTS7, INTS8, INTS9/RC74, INTS10, INTS11/CPSF3L, INTS12, INTS13, INTS14 and INTS15. The core complex associates with protein phosphatase 2A subunits PPP2CA and PPP2R1A, to form the Integrator-PP2A (INTAC) complex. Widely expressed. Expressed in heart, brain, placenta, lung, liver, skeletal muscle, kidney and pancreas.

The protein localises to the nucleus. Its subcellular location is the chromosome. Functionally, component of the integrator complex, a multiprotein complex that terminates RNA polymerase II (Pol II) transcription in the promoter-proximal region of genes. The integrator complex provides a quality checkpoint during transcription elongation by driving premature transcription termination of transcripts that are unfavorably configured for transcriptional elongation: the complex terminates transcription by (1) catalyzing dephosphorylation of the C-terminal domain (CTD) of Pol II subunit POLR2A and SUPT5H/SPT5, (2) degrading the exiting nascent RNA transcript via endonuclease activity and (3) promoting the release of Pol II from bound DNA. The integrator complex is also involved in terminating the synthesis of non-coding Pol II transcripts, such as enhancer RNAs (eRNAs), small nuclear RNAs (snRNAs), telomerase RNAs and long non-coding RNAs (lncRNAs). Within the integrator complex, INTS6 acts as a molecular adapter that promotes assembly of protein phosphatase 2A (PP2A) subunits to the integrator core complex, promoting recruitment of PP2A to transcription pause-release checkpoint. Mediates recruitment of cytoplasmic dynein to the nuclear envelope, probably as component of the integrator complex. May have a tumor suppressor role; an ectopic expression suppressing tumor cell growth. The protein is Integrator complex subunit 6 of Homo sapiens (Human).